Here is a 220-residue protein sequence, read N- to C-terminus: Small ribosomal subunit protein eS8 (220 aa).

The protein belongs to the eukaryotic ribosomal protein eS8 family.

The protein is Small ribosomal subunit protein eS8 (RPS8A) of Leishmania major.